A 494-amino-acid polypeptide reads, in one-letter code: Glycerol kinase (494 aa).

Thr12 contacts ADP. Positions 12, 13, and 14 each coordinate ATP. Thr12 contributes to the sn-glycerol 3-phosphate binding site. Residue Arg16 participates in ADP binding. Sn-glycerol 3-phosphate is bound by residues Arg82, Glu83, Tyr134, and Asp244. Glycerol-binding residues include Arg82, Glu83, Tyr134, Asp244, and Gln245. ADP is bound by residues Thr266 and Gly309. 4 residues coordinate ATP: Thr266, Gly309, Gln313, and Gly410. 2 residues coordinate ADP: Gly410 and Asn414.

The protein belongs to the FGGY kinase family. In terms of assembly, homotetramer and homodimer (in equilibrium).

It carries out the reaction glycerol + ATP = sn-glycerol 3-phosphate + ADP + H(+). It functions in the pathway polyol metabolism; glycerol degradation via glycerol kinase pathway; sn-glycerol 3-phosphate from glycerol: step 1/1. Activated by phosphorylation and inhibited by fructose 1,6-bisphosphate (FBP). Key enzyme in the regulation of glycerol uptake and metabolism. Catalyzes the phosphorylation of glycerol to yield sn-glycerol 3-phosphate. This chain is Glycerol kinase, found in Desulfitobacterium hafniense (strain DSM 10664 / DCB-2).